The sequence spans 426 residues: Tol-Pal system protein TolB (426 aa).

The N-terminal stretch at 1–24 (MKLKSRYTSLISVVSIFFSSMVMA) is a signal peptide.

Belongs to the TolB family. As to quaternary structure, the Tol-Pal system is composed of five core proteins: the inner membrane proteins TolA, TolQ and TolR, the periplasmic protein TolB and the outer membrane protein Pal. They form a network linking the inner and outer membranes and the peptidoglycan layer.

It is found in the periplasm. In terms of biological role, part of the Tol-Pal system, which plays a role in outer membrane invagination during cell division and is important for maintaining outer membrane integrity. This is Tol-Pal system protein TolB from Haemophilus ducreyi (strain 35000HP / ATCC 700724).